Here is a 511-residue protein sequence, read N- to C-terminus: GMP synthase [glutamine-hydrolyzing] (511 aa).

In terms of domain architecture, Glutamine amidotransferase type-1 spans 5–195 (DILVLDFGSQ…AKYACNCDSV (191 aa)). Residue C82 is the Nucleophile of the active site. Active-site residues include H169 and E171. Residues 196 to 386 (WNMGSFAKTQ…LGLSKDVVYR (191 aa)) form the GMPS ATP-PPase domain. 223 to 229 (SGGVDSS) is an ATP binding site.

As to quaternary structure, homodimer.

It catalyses the reaction XMP + L-glutamine + ATP + H2O = GMP + L-glutamate + AMP + diphosphate + 2 H(+). It functions in the pathway purine metabolism; GMP biosynthesis; GMP from XMP (L-Gln route): step 1/1. Catalyzes the synthesis of GMP from XMP. This is GMP synthase [glutamine-hydrolyzing] from Campylobacter lari (strain RM2100 / D67 / ATCC BAA-1060).